We begin with the raw amino-acid sequence, 273 residues long: Putative phosphoenolpyruvate synthase regulatory protein (273 aa).

ADP is bound at residue 153–160 (GVSRSGKT).

It belongs to the pyruvate, phosphate/water dikinase regulatory protein family. PSRP subfamily.

It catalyses the reaction [pyruvate, water dikinase] + ADP = [pyruvate, water dikinase]-phosphate + AMP + H(+). It carries out the reaction [pyruvate, water dikinase]-phosphate + phosphate + H(+) = [pyruvate, water dikinase] + diphosphate. In terms of biological role, bifunctional serine/threonine kinase and phosphorylase involved in the regulation of the phosphoenolpyruvate synthase (PEPS) by catalyzing its phosphorylation/dephosphorylation. The chain is Putative phosphoenolpyruvate synthase regulatory protein from Delftia acidovorans (strain DSM 14801 / SPH-1).